Consider the following 132-residue polypeptide: Transcriptional regulator MraZ (132 aa).

2 consecutive SpoVT-AbrB domains span residues 5–47 and 76–119; these read TYEH…SKDD and TVEI…SKNK.

Belongs to the MraZ family. Forms oligomers.

It is found in the cytoplasm. The protein resides in the nucleoid. In Mycoplasma capricolum subsp. capricolum (strain California kid / ATCC 27343 / NCTC 10154), this protein is Transcriptional regulator MraZ.